A 576-amino-acid chain; its full sequence is MNIFNKLKHDIITASTQLYNNSEIANHASIETPKDSFNGDLSSNIAMIIAAKKNVPPREVALKFKEILNELPYIASIEIAGPGFINFTIKADSWHTAIKDILQNESKFFEIDVDKNKNINIEYVSANPTGPMHIGHARGAVYGDVLANILKKVGYPVTKEYYVNDAGSQINDLVSTVILRYREALGEKITITEGLYPGEYLIPVGQALAKEYGDKLLNMDELERFKIVKNFAIQKMLDLNKEDLKELGVKHDVFFSEQTLHDNGKIEKTVKLLTDMGLIYEGSVPAPKGKVHAEWENRTQELFKSTKYGDDQDRPIRKADGSWTYFASDLAYAKDKIDRGANHLIYVLGADHSGYVKRIEATVKALGKEQVKVDVKICQLVNFVENGVPVKMSKRLGTFASVQDVNHEVGKDIIRFMMLTRENNKTLDFDLIKVKEQSKENPIFYVQYAHVRTLSILSKAMETIPQSYNSFEAGTYDLSLLSSEEEIEIIKLLASWTKTLETAAKYFEPHRVAFYLINLASKFHALWNFGKENNDYRFIIENNVELTTARLALAKAIQKIIASGLEVIGVEPMTRM.

A 'HIGH' region motif is present at residues 126–136 (ANPTGPMHIGH).

This sequence belongs to the class-I aminoacyl-tRNA synthetase family. Monomer.

The protein localises to the cytoplasm. The enzyme catalyses tRNA(Arg) + L-arginine + ATP = L-arginyl-tRNA(Arg) + AMP + diphosphate. The polypeptide is Arginine--tRNA ligase (Rickettsia bellii (strain OSU 85-389)).